Consider the following 252-residue polypeptide: Triosephosphate isomerase (252 aa).

10-12 lines the substrate pocket; that stretch reads NWK. The active-site Electrophile is His96. Glu168 acts as the Proton acceptor in catalysis. Residues Gly174, Ser214, and 235–236 each bind substrate; that span reads GG.

It belongs to the triosephosphate isomerase family. In terms of assembly, homodimer.

The protein resides in the cytoplasm. It catalyses the reaction D-glyceraldehyde 3-phosphate = dihydroxyacetone phosphate. The protein operates within carbohydrate biosynthesis; gluconeogenesis. It functions in the pathway carbohydrate degradation; glycolysis; D-glyceraldehyde 3-phosphate from glycerone phosphate: step 1/1. Involved in the gluconeogenesis. Catalyzes stereospecifically the conversion of dihydroxyacetone phosphate (DHAP) to D-glyceraldehyde-3-phosphate (G3P). The protein is Triosephosphate isomerase of Streptococcus pneumoniae serotype 2 (strain D39 / NCTC 7466).